A 329-amino-acid polypeptide reads, in one-letter code: Peroxidase 17 (329 aa).

An N-terminal signal peptide occupies residues 1-19 (MSLLPHLILYLTLLTVVVT). 4 disulfide bridges follow: Cys-32–Cys-112, Cys-65–Cys-70, Cys-118–Cys-315, and Cys-197–Cys-229. The active-site Proton acceptor is His-63. Asp-64, Val-67, Gly-69, Asp-71, and Ser-73 together coordinate Ca(2+). A substrate-binding site is contributed by Pro-160. 2 N-linked (GlcNAc...) asparagine glycosylation sites follow: Asn-165 and Asn-177. His-190 provides a ligand contact to heme b. Position 191 (Ser-191) interacts with Ca(2+). N-linked (GlcNAc...) asparagine glycosylation is found at Asn-206 and Asn-236. Residues Asp-242, Thr-244, and Asp-249 each coordinate Ca(2+).

It belongs to the peroxidase family. Classical plant (class III) peroxidase subfamily. Heme b serves as cofactor. Requires Ca(2+) as cofactor.

The protein localises to the secreted. It localises to the vacuole. The enzyme catalyses 2 a phenolic donor + H2O2 = 2 a phenolic radical donor + 2 H2O. Removal of H(2)O(2), oxidation of toxic reductants, biosynthesis and degradation of lignin, suberization, auxin catabolism, response to environmental stresses such as wounding, pathogen attack and oxidative stress. These functions might be dependent on each isozyme/isoform in each plant tissue. The sequence is that of Peroxidase 17 (PER17) from Arabidopsis thaliana (Mouse-ear cress).